The following is a 530-amino-acid chain: Hyccin 2 (530 aa).

Threonine 30 and threonine 306 each carry phosphothreonine. Serine 321 and serine 341 each carry phosphoserine. A disordered region spans residues 328 to 410 (RREGAEGVNG…DSVVRKQYVQ (83 aa)). A compositionally biased stretch (polar residues) spans 353–373 (SGASLSSQPIGTKPSSSSQRG). Serine 430, serine 442, serine 444, and serine 491 each carry phosphoserine. The tract at residues 502–530 (EGKELLSPGAPLTKQSRSPSFNMQLISQV) is disordered. Residues 514 to 530 (TKQSRSPSFNMQLISQV) are compositionally biased toward polar residues.

It belongs to the Hyccin family. Component of a phosphatidylinositol 4-kinase (PI4K) complex, composed of PI4KA, EFR3 (EFR3A or EFR3B), TTC7 (TTC7A or TTC7B) and HYCC (HYCC1 or HYCC2).

It localises to the cytoplasm. The protein resides in the cytosol. It is found in the cell membrane. Functionally, component of a complex required to localize phosphatidylinositol 4-kinase (PI4K) to the plasma membrane. The polypeptide is Hyccin 2 (Homo sapiens (Human)).